Reading from the N-terminus, the 721-residue chain is Translation initiation factor eIF2B subunit epsilon (721 aa).

A compositionally biased stretch (low complexity) spans 1 to 13 (MAAPVVAPPGVVV). Residues 1-40 (MAAPVVAPPGVVVSRANKRSGAGPGGSGGGGARGAEEEPP) are disordered. Residue alanine 2 is modified to N-acetylalanine. Arginine 19 is subject to Omega-N-methylarginine. Over residues 22–33 (AGPGGSGGGGAR) the composition is skewed to gly residues. Serine 27 is modified (phosphoserine). Glycyl lysine isopeptide (Lys-Gly) (interchain with G-Cter in ubiquitin) cross-links involve residues lysine 61 and lysine 103. Serine 130 is modified (phosphoserine). Residues lysine 141 and lysine 217 each participate in a glycyl lysine isopeptide (Lys-Gly) (interchain with G-Cter in ubiquitin) cross-link. The residue at position 322 (threonine 322) is a Phosphothreonine. Disordered regions lie at residues 444–483 (PEGS…MKGY) and 523–547 (EESE…SPQM). A phosphoserine mark is found at serine 450, serine 466, serine 469, serine 532, and serine 540. Composition is skewed to acidic residues over residues 456-471 (AEED…DSGA) and 523-537 (EESE…DSEE). The W2 domain maps to 543–720 (GSPQMDDIKV…KEAEEESSED (178 aa)). Serine 544 is modified (phosphoserine; by DYRK2). Serine 717 carries the post-translational modification Phosphoserine.

Belongs to the eIF-2B gamma/epsilon subunits family. In terms of assembly, component of the translation initiation factor 2B (eIF2B) complex which is a heterodecamer of two sets of five different subunits: alpha, beta, gamma, delta and epsilon. Subunits alpha, beta and delta comprise a regulatory subcomplex and subunits epsilon and gamma comprise a catalytic subcomplex. Within the complex, the hexameric regulatory complex resides at the center, with the two heterodimeric catalytic subcomplexes bound on opposite sides. Phosphorylated at Ser-544 by DYRK2; this is required for subsequent phosphorylation by GSK3B. Phosphorylated on serine and threonine residues by GSK3B; phosphorylation inhibits its function. Post-translationally, polyubiquitinated, probably by NEDD4.

The protein localises to the cytoplasm. Its subcellular location is the cytosol. With respect to regulation, activated by the chemical integrated stress response (ISR) inhibitor ISRIB which stimulates guanine nucleotide exchange factor activity for both phosphorylated and unphosphorylated eIF2. Its function is as follows. Acts as a component of the translation initiation factor 2B (eIF2B) complex, which catalyzes the exchange of GDP for GTP on eukaryotic initiation factor 2 (eIF2) gamma subunit. Its guanine nucleotide exchange factor activity is repressed when bound to eIF2 complex phosphorylated on the alpha subunit, thereby limiting the amount of methionyl-initiator methionine tRNA available to the ribosome and consequently global translation is repressed. In Homo sapiens (Human), this protein is Translation initiation factor eIF2B subunit epsilon (EIF2B5).